Reading from the N-terminus, the 468-residue chain is Cyclin-dependent kinase 14 (468 aa).

A phosphoserine mark is found at serine 24, serine 77, and serine 94. The interval 103–132 is disordered; sequence KTSSAGKESPKVRRHSSPSSPTSPKFGKAD. Serine 133 bears the Phosphoserine mark. A Protein kinase domain is found at 134 to 418; it reads YEKLEKLGEG…AQAALSHEYF (285 aa). Residues 140 to 148 and lysine 163 each bind ATP; that span reads LGEGSYATV. Catalysis depends on aspartate 255, which acts as the Proton acceptor. Positions 448–468 are disordered; that stretch reads ESMRAFGKNNSYGKSLSNSKH. A compositionally biased stretch (polar residues) spans 455–468; the sequence is KNNSYGKSLSNSKH.

Belongs to the protein kinase superfamily. CMGC Ser/Thr protein kinase family. CDC2/CDKX subfamily. In terms of assembly, found in a complex with LRP6, CCNY and CAPRIN2 during G2/M stage; CAPRIN2 functions as a scaffold for the complex by binding to CCNY via its N terminus and to CDK14 via its C terminus. Interacts with CCNY; CCNY mediates its recruitment to the plasma membrane and promotes phosphorylation of LRP6. Interacts with CCDN3 and CDKN1A. Interacts with SEPT8. Interacts with 14-3-3 proteina YWHAB, YWHAE, YWHAH and YWHAQ.

It localises to the cell membrane. It is found in the cytoplasm. The protein resides in the nucleus. It catalyses the reaction L-seryl-[protein] + ATP = O-phospho-L-seryl-[protein] + ADP + H(+). It carries out the reaction L-threonyl-[protein] + ATP = O-phospho-L-threonyl-[protein] + ADP + H(+). Serine/threonine-protein kinase activity is promoted by associated cyclins CCDN3 and CCNY and repressed by CDKN1A. Functionally, serine/threonine-protein kinase involved in the control of the eukaryotic cell cycle, whose activity is controlled by an associated cyclin. Acts as a cell-cycle regulator of Wnt signaling pathway during G2/M phase by mediating the phosphorylation of LRP6 at 'Ser-1490', leading to the activation of the Wnt signaling pathway. Acts as a regulator of cell cycle progression and cell proliferation via its interaction with CCDN3. Phosphorylates RB1 in vitro, however the relevance of such result remains to be confirmed in vivo. May also play a role in meiosis, neuron differentiation and may indirectly act as a negative regulator of insulin-responsive glucose transport. This chain is Cyclin-dependent kinase 14 (CDK14), found in Dasypus novemcinctus (Nine-banded armadillo).